The sequence spans 368 residues: Ubiquitin domain-containing protein UBFD1 (368 aa).

Residues 106–139 (SCDARGNLQPAPAQPPGDPAAQASVSNGEDAGGG) form a disordered region. The Ubiquitin-like domain occupies 143–218 (ELVDLKIIWN…IMVVGSTIND (76 aa)). The interval 231–263 (QDAKAEENKKEPLCRQKQHRKVLDKGKPEDVMP) is disordered. Basic and acidic residues-rich tracts occupy residues 233 to 244 (AKAEENKKEPLC) and 251 to 260 (KVLDKGKPED).

The sequence is that of Ubiquitin domain-containing protein UBFD1 (Ubfd1) from Mus musculus (Mouse).